The sequence spans 300 residues: 2-keto-3-deoxy-L-fuconate dehydrogenase (300 aa).

NAD(+)-binding positions include 63–90 (LITA…IATD) and Asp112. Substrate is bound at residue Arg198. The active-site Proton acceptor is Tyr201. NAD(+)-binding positions include Lys205 and 234 to 238 (IKTPS). 2 residues coordinate substrate: Arg242 and Arg260.

This sequence belongs to the short-chain dehydrogenases/reductases (SDR) family.

Its function is as follows. Plays a role in the catabolism of L-fucose. Catalyzes the NAD(+)-dependent oxidation of 2-keo-3-deoxy-L-fuconate to 2,4-diketo-3-deoxy-L-fuconate. This is 2-keto-3-deoxy-L-fuconate dehydrogenase from Xanthomonas campestris pv. campestris (strain ATCC 33913 / DSM 3586 / NCPPB 528 / LMG 568 / P 25).